We begin with the raw amino-acid sequence, 320 residues long: ATP-dependent 6-phosphofructokinase (320 aa).

G12 lines the ATP pocket. 22-26 (RGVVR) contributes to the ADP binding site. ATP is bound by residues 73–74 (RF) and 103–106 (GDGS). A Mg(2+)-binding site is contributed by D104. 126 to 128 (TID) contacts substrate. D128 acts as the Proton acceptor in catalysis. ADP is bound at residue R155. Substrate is bound by residues R163 and 170-172 (MGR). Residues 186-188 (GCE), K212, and 214-216 (KKH) contribute to the ADP site. Substrate-binding positions include E223, R244, and 250–253 (HIQR).

It belongs to the phosphofructokinase type A (PFKA) family. ATP-dependent PFK group I subfamily. Prokaryotic clade 'B1' sub-subfamily. Homotetramer. The cofactor is Mg(2+).

It is found in the cytoplasm. The enzyme catalyses beta-D-fructose 6-phosphate + ATP = beta-D-fructose 1,6-bisphosphate + ADP + H(+). It participates in carbohydrate degradation; glycolysis; D-glyceraldehyde 3-phosphate and glycerone phosphate from D-glucose: step 3/4. With respect to regulation, allosterically activated by ADP and other diphosphonucleosides, and allosterically inhibited by phosphoenolpyruvate. In terms of biological role, catalyzes the phosphorylation of D-fructose 6-phosphate to fructose 1,6-bisphosphate by ATP, the first committing step of glycolysis. The sequence is that of ATP-dependent 6-phosphofructokinase from Edwardsiella ictaluri (strain 93-146).